Consider the following 117-residue polypeptide: Venom protein TxLP11 (117 aa).

The first 22 residues, 1-22 (MNTKTLIVVFLVCLLVSEVVLA), serve as a signal peptide directing secretion.

Post-translationally, contains 4 disulfide bonds. As to expression, expressed by the venom gland.

It is found in the secreted. This chain is Venom protein TxLP11, found in Lychas mucronatus (Chinese swimming scorpion).